Here is a 340-residue protein sequence, read N- to C-terminus: Homeobox protein DBX2 (340 aa).

The homeobox DNA-binding region spans Gly-185–Lys-244. The segment at Gln-283 to Pro-313 is disordered.

This sequence belongs to the H2.0 homeobox family.

It is found in the nucleus. The sequence is that of Homeobox protein DBX2 (DBX2) from Bos taurus (Bovine).